Here is a 210-residue protein sequence, read N- to C-terminus: Shikimate kinase (210 aa).

34–39 (GVGKSV) contributes to the ATP binding site. S38 contacts Mg(2+). Substrate-binding residues include D56, R80, and G102. Residue R140 participates in ATP binding. Position 159 (R159) interacts with substrate.

Belongs to the shikimate kinase family. As to quaternary structure, monomer. The cofactor is Mg(2+).

It localises to the cytoplasm. It catalyses the reaction shikimate + ATP = 3-phosphoshikimate + ADP + H(+). It participates in metabolic intermediate biosynthesis; chorismate biosynthesis; chorismate from D-erythrose 4-phosphate and phosphoenolpyruvate: step 5/7. Catalyzes the specific phosphorylation of the 3-hydroxyl group of shikimic acid using ATP as a cosubstrate. The polypeptide is Shikimate kinase (Bartonella henselae (strain ATCC 49882 / DSM 28221 / CCUG 30454 / Houston 1) (Rochalimaea henselae)).